We begin with the raw amino-acid sequence, 273 residues long: Large ribosomal subunit protein uL2 (273 aa).

Disordered regions lie at residues 28–53 (KPFA…TTRH) and 221–273 (RGTA…RRSK). A compositionally biased stretch (low complexity) spans 39–48 (KSGGRNNNGR).

The protein belongs to the universal ribosomal protein uL2 family. In terms of assembly, part of the 50S ribosomal subunit. Forms a bridge to the 30S subunit in the 70S ribosome.

In terms of biological role, one of the primary rRNA binding proteins. Required for association of the 30S and 50S subunits to form the 70S ribosome, for tRNA binding and peptide bond formation. It has been suggested to have peptidyltransferase activity; this is somewhat controversial. Makes several contacts with the 16S rRNA in the 70S ribosome. The polypeptide is Large ribosomal subunit protein uL2 (Salmonella agona (strain SL483)).